The following is a 120-amino-acid chain: Cell division topological specificity factor (120 aa).

Residues 93–120 (LNSCEGENPQQDPGAAPSEGGHLSSPSP) form a disordered region.

Belongs to the MinE family.

Prevents the cell division inhibition by proteins MinC and MinD at internal division sites while permitting inhibition at polar sites. This ensures cell division at the proper site by restricting the formation of a division septum at the midpoint of the long axis of the cell. This Synechococcus sp. (strain JA-3-3Ab) (Cyanobacteria bacterium Yellowstone A-Prime) protein is Cell division topological specificity factor.